A 207-amino-acid polypeptide reads, in one-letter code: Large ribosomal subunit protein uL4 (207 aa).

Residues 49-78 (HAVKNRSAVRGGGKKPWRQKGTGRARQGSI) are disordered. Over residues 60–71 (GGKKPWRQKGTG) the composition is skewed to basic residues.

The protein belongs to the universal ribosomal protein uL4 family. In terms of assembly, part of the 50S ribosomal subunit.

One of the primary rRNA binding proteins, this protein initially binds near the 5'-end of the 23S rRNA. It is important during the early stages of 50S assembly. It makes multiple contacts with different domains of the 23S rRNA in the assembled 50S subunit and ribosome. Its function is as follows. Forms part of the polypeptide exit tunnel. This chain is Large ribosomal subunit protein uL4, found in Ligilactobacillus salivarius (strain UCC118) (Lactobacillus salivarius).